The chain runs to 274 residues: NAD(P)H dehydrogenase [quinone] 1 (274 aa).

FAD contacts are provided by residues histidine 12, 18-19 (FN), and glutamine 67. Serine 82 is modified (phosphoserine). Residue 104 to 107 (LQWF) coordinates FAD. Position 126 to 128 (126 to 128 (AYT)) interacts with substrate. FAD contacts are provided by residues 148 to 151 (TTGG), tyrosine 156, and arginine 201. Positions 225–274 (PSSLFDLNFQAGFLMKKEVQDEEKNKKFGLSVGHHLGKSIPTDNQIKARK) are important for apoenzyme conformational stability. Residues lysine 250 and lysine 251 each participate in a glycyl lysine isopeptide (Lys-Gly) (interchain with G-Cter in SUMO2) cross-link.

The protein belongs to the NAD(P)H dehydrogenase (quinone) family. As to quaternary structure, homodimer. Interacts with PDLIM4 isoform 2; this interaction stabilizes PDLIM4 isoform 2 in response to oxidative stress and protects it from ubiquitin-independent degradation by the core 20S proteasome. Interacts with TP73 (via SAM domain); this interaction is NADH-dependent, stabilizes TP73 in response to oxidative stress and protects it from ubiquitin-independent degradation by the 20S proteasome. Interacts with TP53; this interaction is NADH-dependent, stabilizes TP53 in response to oxidative stress and protects it from ubiquitin-independent degradation by the 20S proteasome. FAD serves as cofactor.

The protein resides in the cytoplasm. The protein localises to the cytosol. It carries out the reaction a quinone + NADH + H(+) = a quinol + NAD(+). The enzyme catalyses a quinone + NADPH + H(+) = a quinol + NADP(+). It catalyses the reaction ubiquinone-10 + NADH + H(+) = ubiquinol-10 + NAD(+). The catalysed reaction is menadione + NADH + H(+) = menadiol + NAD(+). Inhibited by dicoumarol. Its function is as follows. Flavin-containing quinone reductase that catalyzes two-electron reduction of quinones to hydroquinones using either NADH or NADPH as electron donors. In a ping-pong kinetic mechanism, the electrons are sequentially transferred from NAD(P)H to flavin cofactor and then from reduced flavin to the quinone, bypassing the formation of semiquinone and reactive oxygen species. Regulates cellular redox state primarily through quinone detoxification. Reduces components of plasma membrane redox system such as coenzyme Q and vitamin quinones, producing antioxidant hydroquinone forms. In the process may function as superoxide scavenger to prevent hydroquinone oxidation and facilitate excretion. Alternatively, can activate quinones and their derivatives by generating redox reactive hydroquinones with DNA cross-linking antitumor potential. Acts as a gatekeeper of the core 20S proteasome known to degrade proteins with unstructured regions. Upon oxidative stress, interacts with tumor suppressors TP53 and TP73 in a NADH-dependent way and inhibits their ubiquitin-independent degradation by the 20S proteasome. The chain is NAD(P)H dehydrogenase [quinone] 1 from Homo sapiens (Human).